The primary structure comprises 444 residues: Methylenetetrahydrofolate--tRNA-(uracil-5-)-methyltransferase TrmFO (444 aa).

9–14 (GAGMAG) contacts FAD.

Belongs to the MnmG family. TrmFO subfamily. It depends on FAD as a cofactor.

The protein resides in the cytoplasm. It carries out the reaction uridine(54) in tRNA + (6R)-5,10-methylene-5,6,7,8-tetrahydrofolate + NADH + H(+) = 5-methyluridine(54) in tRNA + (6S)-5,6,7,8-tetrahydrofolate + NAD(+). The catalysed reaction is uridine(54) in tRNA + (6R)-5,10-methylene-5,6,7,8-tetrahydrofolate + NADPH + H(+) = 5-methyluridine(54) in tRNA + (6S)-5,6,7,8-tetrahydrofolate + NADP(+). Functionally, catalyzes the folate-dependent formation of 5-methyl-uridine at position 54 (M-5-U54) in all tRNAs. The polypeptide is Methylenetetrahydrofolate--tRNA-(uracil-5-)-methyltransferase TrmFO (Cereibacter sphaeroides (strain ATCC 17025 / ATH 2.4.3) (Rhodobacter sphaeroides)).